The following is a 171-amino-acid chain: 3-hydroxydecanoyl-[acyl-carrier-protein] dehydratase (171 aa).

The active site involves histidine 70.

This sequence belongs to the thioester dehydratase family. FabA subfamily. As to quaternary structure, homodimer.

The protein resides in the cytoplasm. It catalyses the reaction a (3R)-hydroxyacyl-[ACP] = a (2E)-enoyl-[ACP] + H2O. The enzyme catalyses (3R)-hydroxydecanoyl-[ACP] = (2E)-decenoyl-[ACP] + H2O. It carries out the reaction (2E)-decenoyl-[ACP] = (3Z)-decenoyl-[ACP]. It functions in the pathway lipid metabolism; fatty acid biosynthesis. Its function is as follows. Necessary for the introduction of cis unsaturation into fatty acids. Catalyzes the dehydration of (3R)-3-hydroxydecanoyl-ACP to E-(2)-decenoyl-ACP and then its isomerization to Z-(3)-decenoyl-ACP. Can catalyze the dehydratase reaction for beta-hydroxyacyl-ACPs with saturated chain lengths up to 16:0, being most active on intermediate chain length. This is 3-hydroxydecanoyl-[acyl-carrier-protein] dehydratase from Ectopseudomonas mendocina (strain ymp) (Pseudomonas mendocina).